Consider the following 208-residue polypeptide: MNVYVTLKTKLVAELRQIKQTLQTERNIIRVLRRKLKQIAAQKRFIKFLPKLRYLPTPVTKIEQTARFLVKKFVDPKMKYPMDSIYDKKLSRQSKKVAASRKKKWQRLEKYLGGISNMTKIKEKQIANNVAIIIGQQEEMNAVRECQKLGIKMFHIVDTNCNPGLADHFIPANDDARNSIKFILGKFLTRIRLAHKIKVKFKKTSLKK.

This sequence belongs to the universal ribosomal protein uS2 family.

It localises to the plastid. The protein localises to the chloroplast. This Chlamydomonas reinhardtii (Chlamydomonas smithii) protein is Putative ribosomal protein uS2-like (rps2-2).